Consider the following 501-residue polypeptide: Ribose import ATP-binding protein RbsA (501 aa).

ABC transporter domains are found at residues 5–241 (LSLE…VGRK) and 252–498 (LRND…TGGV). 37-44 (GENGAGKS) is a binding site for ATP.

This sequence belongs to the ABC transporter superfamily. Ribose importer (TC 3.A.1.2.1) family. The complex is composed of an ATP-binding protein (RbsA), two transmembrane proteins (RbsC) and a solute-binding protein (RbsB).

It localises to the cell inner membrane. It carries out the reaction D-ribose(out) + ATP + H2O = D-ribose(in) + ADP + phosphate + H(+). In terms of biological role, part of the ABC transporter complex RbsABC involved in ribose import. Responsible for energy coupling to the transport system. The sequence is that of Ribose import ATP-binding protein RbsA from Hahella chejuensis (strain KCTC 2396).